Reading from the N-terminus, the 384-residue chain is S-adenosylmethionine synthase (384 aa).

His-15 contributes to the ATP binding site. Mg(2+) is bound at residue Asp-17. Glu-43 contributes to the K(+) binding site. Glu-56 and Gln-99 together coordinate L-methionine. Residues 99-109 (QSPDINQGVDR) are flexible loop. Residues 164-166 (DAK), 230-231 (RF), Asp-239, 245-246 (RK), Ala-262, and Lys-266 contribute to the ATP site. Asp-239 provides a ligand contact to L-methionine. L-methionine is bound at residue Lys-270.

It belongs to the AdoMet synthase family. Homotetramer; dimer of dimers. Requires Mg(2+) as cofactor. K(+) serves as cofactor.

The protein resides in the cytoplasm. The enzyme catalyses L-methionine + ATP + H2O = S-adenosyl-L-methionine + phosphate + diphosphate. It participates in amino-acid biosynthesis; S-adenosyl-L-methionine biosynthesis; S-adenosyl-L-methionine from L-methionine: step 1/1. In terms of biological role, catalyzes the formation of S-adenosylmethionine (AdoMet) from methionine and ATP. The overall synthetic reaction is composed of two sequential steps, AdoMet formation and the subsequent tripolyphosphate hydrolysis which occurs prior to release of AdoMet from the enzyme. In Photobacterium profundum (strain SS9), this protein is S-adenosylmethionine synthase.